We begin with the raw amino-acid sequence, 193 residues long: Large ribosomal subunit protein uL18 (193 aa).

The protein belongs to the universal ribosomal protein uL18 family. In terms of assembly, part of the 50S ribosomal subunit. Contacts the 5S and 23S rRNAs.

Its function is as follows. This is one of the proteins that bind and probably mediate the attachment of the 5S RNA into the large ribosomal subunit, where it forms part of the central protuberance. This Methanococcus vannielii (strain ATCC 35089 / DSM 1224 / JCM 13029 / OCM 148 / SB) protein is Large ribosomal subunit protein uL18.